The primary structure comprises 610 residues: Mitochondrial import receptor subunit TOM70 (610 aa).

A2 bears the N-acetylalanine mark. Residues 2-41 (AASKPVEAAMAAAAAPASGNGVGSSGGTAAPGSGAGTLPR) are Mitochondrial intermembrane-facing. A helical membrane pass occupies residues 42 to 62 (WHVALAIGAPLLLGAGAMYLW). At 63 to 610 (SRRRRRREAG…KKYGLKPPTL (548 aa)) the chain is on the cytoplasmic side. Residues 69–109 (REAGGRGDASGLKRNSERKTPEGRASPALGSGPDGSGDSLE) are disordered. Omega-N-methylarginine is present on R74. Low complexity predominate over residues 93–108 (ASPALGSGPDGSGDSL). Phosphoserine is present on residues S94, S99, S104, S107, and S112. 2 TPR repeats span residues 116–149 (AQAA…CPTE) and 155–188 (STFY…NPKY). Position 187 is an N6-acetyllysine (K187). K277 is covalently cross-linked (Glycyl lysine isopeptide (Lys-Gly) (interchain with G-Cter in SUMO2)). TPR repeat units lie at residues 296–329 (ENSG…QGKY), 331–364 (AEAL…KEAN), 369–402 (ANAL…DPMN), 403–436 (SDVY…RPKF), 444–477 (CFAL…FPRC), 478–511 (AEGY…EPDN), 513–546 (TTYV…DNKC), and 547–580 (DFAY…AKSE).

This sequence belongs to the Tom70 family. In terms of assembly, forms part of the preprotein translocase complex of the outer mitochondrial membrane (TOM complex) which consists of at least 7 different proteins (TOMM5, TOMM6, TOMM7, TOMM20, TOMM22, TOMM40 and TOMM70). Interacts with CAPN8. Interacts with TRADD, TRAF6 and STING. Interacts with MAVS. Interacts with HSPA8 and HSP90AA1; both interactions are required for preprotein mitochondrial import. The interaction with HSP90AA1 is direct and mediates the association of TOMM70 with IRF3 and TBK1. Upon mitochondrial depolarization, interacts with PINK1; the interaction is required for PINK1-TOM-TIM23 supercomplex formation which is critical for PINK1 stabilization at the outer mitochondrial membrane, kinase activation and downstream mitophagy.

The protein localises to the mitochondrion outer membrane. Acts as a receptor of the preprotein translocase complex of the outer mitochondrial membrane (TOM complex). Recognizes and mediates the translocation of mitochondrial preproteins from the cytosol into the mitochondria in a chaperone dependent manner. Mediates TBK1 and IRF3 activation induced by MAVS in response to Sendai virus infection and promotes host antiviral responses during virus infection. This is Mitochondrial import receptor subunit TOM70 from Rattus norvegicus (Rat).